The chain runs to 1217 residues: DNA-directed RNA polymerase subunit beta' (1217 aa).

Positions 60, 62, 75, and 78 each coordinate Zn(2+). Mg(2+) is bound by residues D449, D451, and D453. Residues C818, C892, C899, and C902 each contribute to the Zn(2+) site.

It belongs to the RNA polymerase beta' chain family. As to quaternary structure, the RNAP catalytic core consists of 2 alpha, 1 beta, 1 beta' and 1 omega subunit. When a sigma factor is associated with the core the holoenzyme is formed, which can initiate transcription. Requires Mg(2+) as cofactor. Zn(2+) serves as cofactor.

The catalysed reaction is RNA(n) + a ribonucleoside 5'-triphosphate = RNA(n+1) + diphosphate. Functionally, DNA-dependent RNA polymerase catalyzes the transcription of DNA into RNA using the four ribonucleoside triphosphates as substrates. The polypeptide is DNA-directed RNA polymerase subunit beta' (Enterococcus faecalis (strain ATCC 700802 / V583)).